We begin with the raw amino-acid sequence, 246 residues long: Probable 2-phosphosulfolactate phosphatase (246 aa).

This sequence belongs to the ComB family. Mg(2+) serves as cofactor.

It carries out the reaction (2R)-O-phospho-3-sulfolactate + H2O = (2R)-3-sulfolactate + phosphate. The polypeptide is Probable 2-phosphosulfolactate phosphatase (Nostoc punctiforme (strain ATCC 29133 / PCC 73102)).